We begin with the raw amino-acid sequence, 788 residues long: Endonuclease MutS2 (788 aa).

334-341 contributes to the ATP binding site; sequence GPNTGGKT. The Smr domain maps to 713–788; the sequence is LDLRGQRYEE…GTGATIVYLQ (76 aa).

It belongs to the DNA mismatch repair MutS family. MutS2 subfamily. Homodimer. Binds to stalled ribosomes, contacting rRNA.

Its function is as follows. Endonuclease that is involved in the suppression of homologous recombination and thus may have a key role in the control of bacterial genetic diversity. In terms of biological role, acts as a ribosome collision sensor, splitting the ribosome into its 2 subunits. Detects stalled/collided 70S ribosomes which it binds and splits by an ATP-hydrolysis driven conformational change. Acts upstream of the ribosome quality control system (RQC), a ribosome-associated complex that mediates the extraction of incompletely synthesized nascent chains from stalled ribosomes and their subsequent degradation. Probably generates substrates for RQC. The polypeptide is Endonuclease MutS2 (Lactobacillus johnsonii (strain CNCM I-12250 / La1 / NCC 533)).